A 240-amino-acid polypeptide reads, in one-letter code: Uridylate kinase (240 aa).

ATP is bound at residue 12–15 (KLSG). The segment at 20 to 25 (GEQGNG) is involved in allosteric activation by GTP. UMP is bound at residue Gly-54. ATP is bound by residues Gly-55 and Arg-59. Residues Asp-74 and 135 to 142 (TGNPYFST) each bind UMP. Positions 163, 169, and 172 each coordinate ATP.

This sequence belongs to the UMP kinase family. As to quaternary structure, homohexamer. Interacts with BrxC.

The protein resides in the cytoplasm. The enzyme catalyses UMP + ATP = UDP + ADP. The protein operates within pyrimidine metabolism; CTP biosynthesis via de novo pathway; UDP from UMP (UMPK route): step 1/1. With respect to regulation, allosterically activated by GTP. Can also be activated by dGTP and 3'-anthraniloyl-2'-deoxyguanosine-5'-triphosphate (Ant-dGTP). Inhibited by UTP, 5-bromo-UTP and 5-iodo-UTP. Functionally, catalyzes the reversible phosphorylation of UMP to UDP, with ATP or dATP as the most efficient phosphate donors. Is also able to phosphorylate 5-fluoro-UMP and 6-aza-UMP. This Bacillus subtilis (strain 168) protein is Uridylate kinase (pyrH).